A 317-amino-acid polypeptide reads, in one-letter code: MSQDRQLQLVTSVMISAGFEVSEKFTLRPRSFDLIARNNGTLVVIKVVTHIDSVSEEAAFDLDVIAAHLGGVPLIVGERAREAELERGAVYVRYGIYAISVSTMYDYFVEKIPPLVYASPGGLYVNINGDALRELRERRSMSLGDLGQVLGVSRRTISKYESGMGTTLEVAIRIEEYFNTGVVESIDIAKREPAKSDSPTSKKPQGPGVPFGFLEELGMQLHTLRGAPFQALLTFDRHTILTGYGPAQKVVKRAALISNLSRIAKKHAMCVITDYHHEKKIGRTLVIGEERLHSIEDGFELLDLLGDIGADPSPRDS.

The HTH cro/C1-type domain maps to 132 to 185; the sequence is LRELRERRSMSLGDLGQVLGVSRRTISKYESGMGTTLEVAIRIEEYFNTGVVES. Residues 143–162 constitute a DNA-binding region (H-T-H motif); sequence LGDLGQVLGVSRRTISKYES.

In Methanoregula boonei (strain DSM 21154 / JCM 14090 / 6A8), this protein is Putative HTH-type transcriptional regulatory protein Mboo_0195.